Reading from the N-terminus, the 378-residue chain is Succinyl-diaminopimelate desuccinylase (378 aa).

H77 contacts Zn(2+). D79 is a catalytic residue. Zn(2+) is bound at residue D108. E138 (proton acceptor) is an active-site residue. Zn(2+) contacts are provided by E139, E167, and H350.

Belongs to the peptidase M20A family. DapE subfamily. In terms of assembly, homodimer. Requires Zn(2+) as cofactor. Co(2+) serves as cofactor.

The enzyme catalyses N-succinyl-(2S,6S)-2,6-diaminopimelate + H2O = (2S,6S)-2,6-diaminopimelate + succinate. It participates in amino-acid biosynthesis; L-lysine biosynthesis via DAP pathway; LL-2,6-diaminopimelate from (S)-tetrahydrodipicolinate (succinylase route): step 3/3. Its function is as follows. Catalyzes the hydrolysis of N-succinyl-L,L-diaminopimelic acid (SDAP), forming succinate and LL-2,6-diaminopimelate (DAP), an intermediate involved in the bacterial biosynthesis of lysine and meso-diaminopimelic acid, an essential component of bacterial cell walls. This is Succinyl-diaminopimelate desuccinylase from Erythrobacter litoralis (strain HTCC2594).